Here is a 208-residue protein sequence, read N- to C-terminus: Ribosomal RNA large subunit methyltransferase E (208 aa).

S-adenosyl-L-methionine-binding residues include glycine 63, tryptophan 65, aspartate 83, aspartate 99, and aspartate 124. Lysine 164 serves as the catalytic Proton acceptor.

Belongs to the class I-like SAM-binding methyltransferase superfamily. RNA methyltransferase RlmE family.

The protein localises to the cytoplasm. The catalysed reaction is uridine(2552) in 23S rRNA + S-adenosyl-L-methionine = 2'-O-methyluridine(2552) in 23S rRNA + S-adenosyl-L-homocysteine + H(+). Specifically methylates the uridine in position 2552 of 23S rRNA at the 2'-O position of the ribose in the fully assembled 50S ribosomal subunit. The chain is Ribosomal RNA large subunit methyltransferase E from Enterobacter sp. (strain 638).